A 252-amino-acid chain; its full sequence is Probable phosphatase Shewana3_2794 (252 aa).

Positions 8, 10, 16, 41, 74, 102, 132, 193, and 195 each coordinate Zn(2+).

Belongs to the PHP family. Zn(2+) is required as a cofactor.

In Shewanella sp. (strain ANA-3), this protein is Probable phosphatase Shewana3_2794.